The following is a 119-amino-acid chain: Large ribosomal subunit protein uL24 (119 aa).

Belongs to the universal ribosomal protein uL24 family. As to quaternary structure, part of the 50S ribosomal subunit.

One of two assembly initiator proteins, it binds directly to the 5'-end of the 23S rRNA, where it nucleates assembly of the 50S subunit. Its function is as follows. One of the proteins that surrounds the polypeptide exit tunnel on the outside of the subunit. The polypeptide is Large ribosomal subunit protein uL24 (Clavibacter sepedonicus (Clavibacter michiganensis subsp. sepedonicus)).